Here is a 425-residue protein sequence, read N- to C-terminus: 2,3-diketo-L-gulonate TRAP transporter large permease protein YiaN (425 aa).

11 consecutive transmembrane segments (helical) span residues 3 to 23 (VLIF…IAWA), 54 to 74 (FSLL…AGGL), 93 to 113 (LGYV…SAVA), 139 to 159 (LIAS…FIIF), 170 to 190 (LFMA…LTWW), 209 to 229 (IWHS…IIGG), 235 to 255 (FTPT…ATVI), 277 to 297 (VVMF…IAEL), 314 to 334 (LLFI…DLTP), 355 to 375 (IYFG…PPIG), and 399 to 419 (YVLV…LIIL).

It belongs to the TRAP transporter large permease family. In terms of assembly, the complex comprises the extracytoplasmic solute receptor protein YiaO, and the two transmembrane proteins YiaM and YiaN.

It localises to the cell inner membrane. Part of the tripartite ATP-independent periplasmic (TRAP) transport system YiaMNO involved in the uptake of 2,3-diketo-L-gulonate. This Escherichia coli (strain K12) protein is 2,3-diketo-L-gulonate TRAP transporter large permease protein YiaN (yiaN).